The primary structure comprises 119 residues: Large ribosomal subunit protein bL12 (119 aa).

This sequence belongs to the bacterial ribosomal protein bL12 family. In terms of assembly, homodimer. Part of the ribosomal stalk of the 50S ribosomal subunit. Forms a multimeric L10(L12)X complex, where L10 forms an elongated spine to which 2 to 4 L12 dimers bind in a sequential fashion. Binds GTP-bound translation factors.

Functionally, forms part of the ribosomal stalk which helps the ribosome interact with GTP-bound translation factors. Is thus essential for accurate translation. This is Large ribosomal subunit protein bL12 from Lysinibacillus sphaericus (strain C3-41).